The following is a 291-amino-acid chain: 3-hydroxy-5-phosphonooxypentane-2,4-dione thiolase (291 aa).

Lysine 203 functions as the Schiff-base intermediate with substrate in the catalytic mechanism.

Belongs to the DeoC/FbaB aldolase family. Homodecamer.

The protein localises to the cytoplasm. It carries out the reaction dihydroxyacetone phosphate + acetyl-CoA = 3-hydroxy-2,4-dioxopentyl phosphate + CoA. Involved in the degradation of phospho-AI-2, thereby terminating induction of the lsr operon and closing the AI-2 signaling cycle. Catalyzes the transfer of an acetyl moiety from 3-hydroxy-5-phosphonooxypentane-2,4-dione to CoA to form glycerone phosphate and acetyl-CoA. This is 3-hydroxy-5-phosphonooxypentane-2,4-dione thiolase from Yersinia enterocolitica serotype O:8 / biotype 1B (strain NCTC 13174 / 8081).